The primary structure comprises 332 residues: 3-ketodihydrosphingosine reductase (332 aa).

The first 25 residues, 1-25, serve as a signal peptide directing secretion; the sequence is MLLLAAASLVAFVLLLYMVSPLISP. Topologically, residues 26–269 are cytoplasmic; sequence KPLALPGAHV…QGNFNSSIGS (244 aa). 7 residues coordinate NADPH: glycine 39, serine 41, serine 42, glycine 43, arginine 64, lysine 68, and aspartate 93. The GXSXG signature appears at 39 to 43; sequence GGSSG. Catalysis depends on serine 172, which acts as the Proton donor. The active-site Proton acceptor is the tyrosine 186. NADP(+) contacts are provided by tyrosine 186 and lysine 190. The active-site Lowers pKa of active site Tyr is lysine 190. A helical transmembrane segment spans residues 270–290; sequence DGYMLSSLTCGMAPVTSIMEG. The Lumenal portion of the chain corresponds to 291–292; that stretch reads LQ. Residues 293 to 313 form a helical membrane-spanning segment; the sequence is QVVTMGLFRTIALFYLGSFDS. Residues 314–331 lie on the Cytoplasmic side of the membrane; sequence IVRRCMMQKAKLETVDKT.

It belongs to the short-chain dehydrogenases/reductases (SDR) family.

The protein resides in the endoplasmic reticulum membrane. The enzyme catalyses sphinganine + NADP(+) = 3-oxosphinganine + NADPH + H(+). It participates in lipid metabolism; sphingolipid metabolism. Its function is as follows. Catalyzes the reduction of 3'-oxosphinganine (3-ketodihydrosphingosine/KDS) to sphinganine (dihydrosphingosine/DHS), the second step of de novo sphingolipid biosynthesis. The protein is 3-ketodihydrosphingosine reductase (KDSR) of Bos taurus (Bovine).